The following is a 336-amino-acid chain: Probable G-protein coupled receptor 160 (336 aa).

The Extracellular portion of the chain corresponds to Met1–Ser21. Asn8 carries an N-linked (GlcNAc...) asparagine glycan. A helical transmembrane segment spans residues Leu22 to Ile42. Residues Leu43–Glu56 are Cytoplasmic-facing. The helical transmembrane segment at Tyr57–Thr77 threads the bilayer. The Extracellular segment spans residues Tyr78 to Cys95. A helical membrane pass occupies residues Leu96–Ala116. Residues Cys117–Lys136 lie on the Cytoplasmic side of the membrane. Residues Leu137 to Asp157 form a helical membrane-spanning segment. At Pro158–Leu187 the chain is on the extracellular side. The chain crosses the membrane as a helical span at residues Ser188 to Ile208. Topologically, residues Gln209–Arg243 are cytoplasmic. The chain crosses the membrane as a helical span at residues Leu244–Ser264. Residues Leu265–Tyr272 lie on the Extracellular side of the membrane. Residues Ile273 to Trp293 traverse the membrane as a helical segment. The Cytoplasmic portion of the chain corresponds to Phe294–Cys336.

Belongs to the G-protein coupled receptor 1 family.

It localises to the cell membrane. Its function is as follows. Orphan receptor. The polypeptide is Probable G-protein coupled receptor 160 (Gpr160) (Rattus norvegicus (Rat)).